The chain runs to 257 residues: uncharacterized protein (257 aa).

This is an uncharacterized protein from Acidianus bottle-shaped virus (isolate Italy/Pozzuoli) (ABV).